The sequence spans 882 residues: Leucine--tRNA ligase (882 aa).

A 'HIGH' region motif is present at residues 43–53; it reads PYPSGRIHMGH. The short motif at 634 to 638 is the 'KMSKS' region element; it reads KMSKS. Lys637 is an ATP binding site.

The protein belongs to the class-I aminoacyl-tRNA synthetase family.

It localises to the cytoplasm. It carries out the reaction tRNA(Leu) + L-leucine + ATP = L-leucyl-tRNA(Leu) + AMP + diphosphate. The protein is Leucine--tRNA ligase of Rhodopseudomonas palustris (strain BisB18).